The following is a 527-amino-acid chain: ATP synthase subunit alpha (527 aa).

Position 169–176 (169–176) interacts with ATP; sequence GDRQTGKT.

It belongs to the ATPase alpha/beta chains family. F-type ATPases have 2 components, CF(1) - the catalytic core - and CF(0) - the membrane proton channel. CF(1) has five subunits: alpha(3), beta(3), gamma(1), delta(1), epsilon(1). CF(0) has three main subunits: a(1), b(2) and c(9-12). The alpha and beta chains form an alternating ring which encloses part of the gamma chain. CF(1) is attached to CF(0) by a central stalk formed by the gamma and epsilon chains, while a peripheral stalk is formed by the delta and b chains.

Its subcellular location is the cell membrane. It carries out the reaction ATP + H2O + 4 H(+)(in) = ADP + phosphate + 5 H(+)(out). Functionally, produces ATP from ADP in the presence of a proton gradient across the membrane. The alpha chain is a regulatory subunit. This chain is ATP synthase subunit alpha, found in Metamycoplasma arthritidis (strain 158L3-1) (Mycoplasma arthritidis).